Reading from the N-terminus, the 52-residue chain is DNA import protein CedA2 (52 aa).

The next 2 membrane-spanning stretches (helical) occupy residues 1–21 (MKSYLLVSMLLLLNSILVYIY) and 27–47 (ILVSGITVAVIIYIVVKIIFE).

Forms a complex composed of CedA, CedA1 and CedA2.

The protein resides in the cell membrane. Functionally, part of the Ced system, which is involved in DNA import. The chain is DNA import protein CedA2 from Sulfolobus acidocaldarius (strain ATCC 33909 / DSM 639 / JCM 8929 / NBRC 15157 / NCIMB 11770).